Here is a 438-residue protein sequence, read N- to C-terminus: Succinyl-CoA:glutarate CoA-transferase (438 aa).

Residues 1–31 constitute a mitochondrion transit peptide; the sequence is MLATLARVAALRRTCLFSGRGGGRGLWTGRP. D205 (nucleophile) is an active-site residue. The residue at position 394 (K394) is an N6-acetyllysine.

The protein belongs to the CoA-transferase III family. Highly expressed in kidney. Intermediate expression in liver, skeletal muscle and pancreas. Little to no expression detected in other tissues examined.

Its subcellular location is the mitochondrion. The catalysed reaction is glutarate + succinyl-CoA = glutaryl-CoA + succinate. It carries out the reaction 3-hydroxy-3-methylglutarate + succinyl-CoA = (3S)-3-hydroxy-3-methylglutaryl-CoA + succinate. The enzyme catalyses 3-hydroxy-3-methylglutarate + glutaryl-CoA = (3S)-3-hydroxy-3-methylglutaryl-CoA + glutarate. It catalyses the reaction hexanedioate + glutaryl-CoA = hexanedioyl-CoA + glutarate. The catalysed reaction is itaconate + glutaryl-CoA = itaconyl-CoA + glutarate. It carries out the reaction itaconate + succinyl-CoA = itaconyl-CoA + succinate. Its activity is regulated as follows. Inhibited by valsartan and losartan carboxylate. In terms of biological role, coenzyme A (CoA) transferase that reversibly catalyzes the transfer of a CoA moiety from a dicarboxyl-CoA to a dicarboxylate in a metabolite recycling process. Displays preference for succinyl-CoA and glutarate-CoA as dicarboxyl-CoA donors and glutarate, succinate, adipate/hexanedioate, itaconate and 3-hydroxy-3-methylglutarate as dicarboxylate acceptors. Acts on intermediates or end products of lysine and tryptophan degradation pathway, in particular catalyzes succinyl-CoA-dependent reesterification of free glutarate into glutaryl-CoA to prevent renal excretion of glutarate. Upon inflammation, may convert macrophage-derived itaconate to itaconyl-CoA in erythroid precursors where it negatively regulates the TCA cycle and heme synthesis to limit erythroid differentiation in the context of stress erythropoiesis. This chain is Succinyl-CoA:glutarate CoA-transferase, found in Homo sapiens (Human).